Here is a 221-residue protein sequence, read N- to C-terminus: 7-cyano-7-deazaguanine synthase (221 aa).

10-20 is an ATP binding site; it reads FSGGQDSTTCL. Positions 187, 196, 199, and 202 each coordinate Zn(2+).

It belongs to the QueC family. As to quaternary structure, homodimer. Zn(2+) is required as a cofactor.

It catalyses the reaction 7-carboxy-7-deazaguanine + NH4(+) + ATP = 7-cyano-7-deazaguanine + ADP + phosphate + H2O + H(+). Its pathway is purine metabolism; 7-cyano-7-deazaguanine biosynthesis. In terms of biological role, catalyzes the ATP-dependent conversion of 7-carboxy-7-deazaguanine (CDG) to 7-cyano-7-deazaguanine (preQ(0)). The chain is 7-cyano-7-deazaguanine synthase from Shouchella clausii (strain KSM-K16) (Alkalihalobacillus clausii).